A 64-amino-acid chain; its full sequence is uncharacterized protein (64 aa).

It localises to the host cytoplasm. This is an uncharacterized protein from Enterobacteriaceae (Bacteriophage Mu).